The sequence spans 463 residues: Putative protein FAM90A2P (463 aa).

Disordered regions lie at residues 1–42 (MTAR…DPRL), 67–115 (ALVP…PQRK), 150–295 (MPVH…PAQA), and 326–365 (ALENLQPPPAATELGPSTSPQMGRRTPAQVPGVDRQPPHS). Basic and acidic residues-rich tracts occupy residues 74–83 (GKKEGKENLK), 97–114 (NKDKGEKEERPRQQDPQR), and 159–170 (PCVDPELADRSA). Positions 180–198 (LASLSPLRKASLRSSSSLG) are enriched in low complexity.

This sequence belongs to the FAM90 family.

This Homo sapiens (Human) protein is Putative protein FAM90A2P (FAM90A2P).